Consider the following 837-residue polypeptide: Translation initiation factor IF-2 (837 aa).

Disordered regions lie at residues 1–44 (MTEK…VRKS) and 62–251 (KAQE…TKPA). Composition is skewed to basic and acidic residues over residues 62–102 (KAQE…EAKP) and 111–165 (ADPE…HNDS). A compositionally biased stretch (basic residues) spans 189 to 205 (RENHIRTGKNKVTKAKK). Basic and acidic residues predominate over residues 206 to 229 (GGRDDNGSKDERSADRRNQKDMRG). Positions 242 to 251 (TLQQAFTKPA) are enriched in polar residues. The 170-residue stretch at 337–506 (QRAPVVTIMG…LLQSEVLELT (170 aa)) folds into the tr-type G domain. A G1 region spans residues 346 to 353 (GHVDHGKT). 346–353 (GHVDHGKT) provides a ligand contact to GTP. The interval 371–375 (GITQH) is G2. A G3 region spans residues 392-395 (DTPG). Residues 392 to 396 (DTPGH) and 446 to 449 (NKID) each bind GTP. Positions 446 to 449 (NKID) are G4. Residues 482–484 (SAK) form a G5 region.

Belongs to the TRAFAC class translation factor GTPase superfamily. Classic translation factor GTPase family. IF-2 subfamily.

The protein resides in the cytoplasm. In terms of biological role, one of the essential components for the initiation of protein synthesis. Protects formylmethionyl-tRNA from spontaneous hydrolysis and promotes its binding to the 30S ribosomal subunits. Also involved in the hydrolysis of GTP during the formation of the 70S ribosomal complex. This Actinobacillus succinogenes (strain ATCC 55618 / DSM 22257 / CCUG 43843 / 130Z) protein is Translation initiation factor IF-2.